A 240-amino-acid polypeptide reads, in one-letter code: Probable transcriptional regulatory protein HPG27_148 (240 aa).

The protein belongs to the TACO1 family.

The protein resides in the cytoplasm. This chain is Probable transcriptional regulatory protein HPG27_148, found in Helicobacter pylori (strain G27).